Reading from the N-terminus, the 742-residue chain is 5-methyltetrahydropteroyltriglutamate--homocysteine methyltransferase (742 aa).

Residues 18–21 and lysine 112 contribute to the 5-methyltetrahydropteroyltri-L-glutamate site; that span reads REWK. L-homocysteine contacts are provided by residues 420–422 and glutamate 473; that span reads IGS. L-methionine contacts are provided by residues 420-422 and glutamate 473; that span reads IGS. Position 550 (tryptophan 550) interacts with 5-methyltetrahydropteroyltri-L-glutamate. Aspartate 588 lines the L-homocysteine pocket. Aspartate 588 contacts L-methionine. Glutamate 594 is a 5-methyltetrahydropteroyltri-L-glutamate binding site. Zn(2+) is bound by residues histidine 630, cysteine 632, and glutamate 654. Histidine 683 (proton donor) is an active-site residue. Residue cysteine 715 participates in Zn(2+) binding.

It belongs to the vitamin-B12 independent methionine synthase family. Zn(2+) is required as a cofactor.

It carries out the reaction 5-methyltetrahydropteroyltri-L-glutamate + L-homocysteine = tetrahydropteroyltri-L-glutamate + L-methionine. It participates in amino-acid biosynthesis; L-methionine biosynthesis via de novo pathway; L-methionine from L-homocysteine (MetE route): step 1/1. Catalyzes the transfer of a methyl group from 5-methyltetrahydrofolate to homocysteine resulting in methionine formation. This is 5-methyltetrahydropteroyltriglutamate--homocysteine methyltransferase from Staphylococcus aureus (strain USA300).